The chain runs to 1091 residues: ATP-dependent helicase/deoxyribonuclease subunit B (1091 aa).

It belongs to the helicase family. AddB/RexB type 2 subfamily. Heterodimer of AddA and RexB. Mg(2+) is required as a cofactor.

Its function is as follows. The heterodimer acts as both an ATP-dependent DNA helicase and an ATP-dependent, dual-direction single-stranded exonuclease. Recognizes the chi site generating a DNA molecule suitable for the initiation of homologous recombination. This subunit has 5' -&gt; 3' nuclease activity but not helicase activity. This Streptococcus pneumoniae (strain ATCC 700669 / Spain 23F-1) protein is ATP-dependent helicase/deoxyribonuclease subunit B.